The chain runs to 728 residues: Catalase-peroxidase 1 (728 aa).

The first 16 residues, 1–16 (MDKAQHTQGKCPVAHG), serve as a signal peptide directing secretion. A cross-link (tryptophyl-tyrosyl-methioninium (Trp-Tyr) (with M-251)) is located at residues 97 to 225 (WHSAGTYRMA…LAAVMMGLIY (129 aa)). The active-site Proton acceptor is the His98. Residues 225 to 251 (YVNPEGVDGQPDPLKTAQDIRVTFERM) constitute a cross-link (tryptophyl-tyrosyl-methioninium (Tyr-Met) (with W-97)). His266 provides a ligand contact to heme b.

The protein belongs to the peroxidase family. Peroxidase/catalase subfamily. In terms of assembly, homodimer or homotetramer. The cofactor is heme b. In terms of processing, formation of the three residue Trp-Tyr-Met cross-link is important for the catalase, but not the peroxidase activity of the enzyme.

The enzyme catalyses H2O2 + AH2 = A + 2 H2O. The catalysed reaction is 2 H2O2 = O2 + 2 H2O. Its function is as follows. Bifunctional enzyme with both catalase and broad-spectrum peroxidase activity. The protein is Catalase-peroxidase 1 of Shewanella frigidimarina (strain NCIMB 400).